Consider the following 901-residue polypeptide: MELQYISYFQPTSSVVALLLALVSILSSVVVLRKTFLNNYSSSPASSTKTAVLSHQRQQSCALPISGLLHIFMNKNGLIHVTLGNMADKYGPIFSFPTGSHRTLVVSSWEMVKECFTGNNDTAFSNRPIPLAFKTIFYACGGIDSYGLSSVPYGKYWRELRKVCVHNLLSNQQLLKFRHLIISQVDTSFNKLYELCKNSEDNHGNYTTTTTTAAGMVRIDDWLAELSFNVIGRIVCGFQSGPKTGAPSRVEQFKEAINEASYFMSTSPVSDNVPMLGWIDQLTGLTRNMKHCGKKLDLVVESIINDHRQKRRFSRTKGGDEKDDEQDDFIDICLSIMEQPQLPGNNNPSQIPIKSIVLDMIGGGTDTTKLTTIWTLSLLLNNPHVLDKAKQEVDAHFRTKRRSTNDAAAAVVDFDDIRNLVYIQAIIKESMRLYPASPVVERLSGEDCVVGGFHVPAGTRLWANVWKMQRDPKVWDDPLVFRPDRFLSDEQKMVDVRGQNYELLPFGAGRRVCPGVSFSLDLMQLVLTRLILEFEMKSPSGKVDMTATPGLMSYKVIPLDILLTHRRIKPCVQSAASERDMESSGVPVITLGSGKVMPVLGMGTFEKVGKGSERERLAILKAIEVGYRYFDTAAAYETEEVLGEAIAEALQLGLVKSRDELFISSMLWCTDAHADRVLLALQNSLRNLKLEYVDLYMLPFPASLKPGKITMDIPEEDICRMDYRSVWAAMEECQNLGFTKSIGVSNFSCKKLQELMATANIPPAVNQVEMSPAFQQKKLREYCNANNILVSAISVLGSNGTPWGSNAVLGSEVLKKIAMAKGKSVAQVSMRWVYEQGASLVVKSFSEERLRENLNIFDWELTKEDHEKIGEIPQCRILSAYFLVSPNGPFKSQEELWDDEA.

Residues 12–32 form a helical membrane-spanning segment; that stretch reads TSSVVALLLALVSILSSVVVL. Cys513 is a heme binding site.

In the N-terminal section; belongs to the cytochrome P450 family. This sequence in the C-terminal section; belongs to the aldo/keto reductase family. The cofactor is heme.

The protein localises to the membrane. The enzyme catalyses (R)-reticuline + NADP(+) = 1,2-dehydroreticuline + NADPH + H(+). It catalyses the reaction (S)-reticuline + reduced [NADPH--hemoprotein reductase] + O2 = 1,2-dehydroreticuline + oxidized [NADPH--hemoprotein reductase] + 2 H2O + H(+). It participates in alkaloid biosynthesis; morphine biosynthesis. Functionally, bifunctional protein involved in the biosynthesis of morphinan-type benzylisoquinoline alkaloids. Required for the isomerization of (S)- to (R)-reticuline. The cytochrome P450 module is responsible for the conversion of (S)-reticuline to 1,2-dehydroreticuline while the oxidoreductase module converts 1,2-dehydroreticuline to (R)-reticuline. The polypeptide is Bifunctional protein STORR (Papaver somniferum (Opium poppy)).